Reading from the N-terminus, the 200-residue chain is Adenylate kinase (200 aa).

10–15 (GAGKGT) lines the ATP pocket. The tract at residues 30–59 (STGDMLRAAVAAETPVGLEAKAIMESGGLV) is NMP. Residues Thr-31, Arg-36, 57–59 (GLV), 85–88 (GFPR), and Gln-92 contribute to the AMP site. An LID region spans residues 126–142 (KRAEETAARGQPVRKDD). Arg-127 contributes to the ATP binding site. Arg-139 and Arg-150 together coordinate AMP. An ATP-binding site is contributed by Lys-178.

It belongs to the adenylate kinase family. Monomer.

The protein localises to the cytoplasm. The catalysed reaction is AMP + ATP = 2 ADP. The protein operates within purine metabolism; AMP biosynthesis via salvage pathway; AMP from ADP: step 1/1. Catalyzes the reversible transfer of the terminal phosphate group between ATP and AMP. Plays an important role in cellular energy homeostasis and in adenine nucleotide metabolism. The polypeptide is Adenylate kinase (Methylorubrum extorquens (strain PA1) (Methylobacterium extorquens)).